The following is a 199-amino-acid chain: dITP/XTP pyrophosphatase (199 aa).

12–17 lines the substrate pocket; sequence SGNAGK. The active-site Proton acceptor is Asp-73. Asp-73 is a binding site for Mg(2+). Residues Ser-74, 157 to 160, Lys-180, and 185 to 186 each bind substrate; these read FGYD and HR.

The protein belongs to the HAM1 NTPase family. Homodimer. Mg(2+) is required as a cofactor.

It carries out the reaction XTP + H2O = XMP + diphosphate + H(+). The catalysed reaction is dITP + H2O = dIMP + diphosphate + H(+). The enzyme catalyses ITP + H2O = IMP + diphosphate + H(+). In terms of biological role, pyrophosphatase that catalyzes the hydrolysis of nucleoside triphosphates to their monophosphate derivatives, with a high preference for the non-canonical purine nucleotides XTP (xanthosine triphosphate), dITP (deoxyinosine triphosphate) and ITP. Seems to function as a house-cleaning enzyme that removes non-canonical purine nucleotides from the nucleotide pool, thus preventing their incorporation into DNA/RNA and avoiding chromosomal lesions. This Neisseria meningitidis serogroup B (strain ATCC BAA-335 / MC58) protein is dITP/XTP pyrophosphatase.